We begin with the raw amino-acid sequence, 465 residues long: Probable citrate synthase, mitochondrial (465 aa).

Catalysis depends on residues H303, H349, and D404.

This sequence belongs to the citrate synthase family. As to quaternary structure, homodimer.

Its subcellular location is the mitochondrion matrix. It catalyses the reaction oxaloacetate + acetyl-CoA + H2O = citrate + CoA + H(+). It functions in the pathway carbohydrate metabolism; tricarboxylic acid cycle; isocitrate from oxaloacetate: step 1/2. The sequence is that of Probable citrate synthase, mitochondrial from Glossina morsitans morsitans (Savannah tsetse fly).